We begin with the raw amino-acid sequence, 130 residues long: Protein BLT4 (130 aa).

The first 25 residues, 1–25, serve as a signal peptide directing secretion; that stretch reads MARTAATKLALVPLVAAMLLVAADA. Positions 80–130 are disordered; the sequence is VPARTTPAGPQASPPGAASASPTRSAPVSTALRSTDRTRAPHISSDRRLVG. Positions 84–110 are enriched in low complexity; it reads TTPAGPQASPPGAASASPTRSAPVSTA. Positions 113–130 are enriched in basic and acidic residues; that stretch reads STDRTRAPHISSDRRLVG.

Belongs to the plant LTP family. In terms of tissue distribution, shoot meristem.

In terms of biological role, possible dehydrative stress responsive protein. Not shown to have lipid transfer activity. This Hordeum vulgare (Barley) protein is Protein BLT4 (BLT4).